A 448-amino-acid polypeptide reads, in one-letter code: Fibulin-5 (448 aa).

Residues 1–23 (MPGFKRILTVTVLALCLPTPGNA) form the signal peptide. Positions 42 to 82 (DVDECRTIPEACRGDMMCVNQNGGYLCIPRTNPVYRGPYSN) constitute an EGF-like 1; calcium-binding domain. Cystine bridges form between Cys-46–Cys-59, Cys-53–Cys-68, Cys-131–Cys-144, Cys-138–Cys-153, Cys-155–Cys-166, Cys-172–Cys-181, Cys-177–Cys-190, Cys-192–Cys-205, Cys-211–Cys-221, Cys-217–Cys-230, Cys-232–Cys-245, Cys-251–Cys-262, Cys-258–Cys-271, Cys-273–Cys-286, Cys-292–Cys-305, Cys-299–Cys-314, and Cys-320–Cys-332. The Cell attachment site signature appears at 54-56 (RGD). The EGF-like 2; calcium-binding domain occupies 127-167 (DVDECATDSHQCNPTQICINTEGGYTCSCTDGYWLLEGQCL). The EGF-like 3; calcium-binding domain maps to 168–206 (DIDECRYGYCQQLCANVPGSYSCTCNPGFTLNEDGRSCQ). Positions 207 to 246 (DVNECATENPCVQTCVNTYGSFICRCDPGYELEDDGVHCS) constitute an EGF-like 4; calcium-binding domain. The tract at residues 245-448 (CSDMDECSFS…LRIYVSQYPF (204 aa)) is interaction with LOXL1. The region spanning 247–287 (DMDECSFSEFLCQHECVNQPGTYFCSCPAGYILLDDNRSCQ) is the EGF-like 5; calcium-binding domain. Residues Asn-283 and Asn-296 are each glycosylated (N-linked (GlcNAc...) asparagine). The 46-residue stretch at 288 to 333 (DINECEHRNHTCILQQTCYNLQGGFKCIDPIRCEEPYLRISDNRCM) folds into the EGF-like 6; calcium-binding domain.

This sequence belongs to the fibulin family. Homodimer. Monomer, homodimerizes in presence of Ca(2+). Interacts with ELN. Interacts (via N-terminus) with the integrins ITGAV/ITGB3, ITGAV/ITGB5 and ITGA9/ITGB1. Interacts with FBN1 (via N-terminal domain). Forms a ternary complex with ELN and FBN1. Interacts with EFEMP2 with moderate affinity. Interacts with LOXL1. In terms of processing, N-glycosylated.

It is found in the secreted. It localises to the extracellular space. The protein resides in the extracellular matrix. Essential for elastic fiber formation, is involved in the assembly of continuous elastin (ELN) polymer and promotes the interaction of microfibrils and ELN. Stabilizes and organizes elastic fibers in the skin, lung and vasculature. Promotes adhesion of endothelial cells through interaction of integrins and the RGD motif. Vascular ligand for integrin receptors which may play a role in vascular development and remodeling. May act as an adapter that mediates the interaction between FBN1 and ELN. The polypeptide is Fibulin-5 (FBLN5) (Bos taurus (Bovine)).